The primary structure comprises 126 residues: Protein ApaG (126 aa).

The ApaG domain occupies 2-126; that stretch reads SDPRYQIDVS…FRLAVPGALH (125 aa).

This Pseudomonas fluorescens (strain SBW25) protein is Protein ApaG.